A 226-amino-acid polypeptide reads, in one-letter code: Phosphoglycolate phosphatase (226 aa).

Residue aspartate 8 is the Nucleophile of the active site. 2 residues coordinate Mg(2+): aspartate 8 and aspartate 10. Lysine 152 provides a ligand contact to substrate. 2 residues coordinate Mg(2+): aspartate 175 and aspartate 179.

The protein belongs to the archaeal SPP-like hydrolase family. The cofactor is Mg(2+).

The catalysed reaction is 2-phosphoglycolate + H2O = glycolate + phosphate. Catalyzes the dephosphorylation of 2-phosphoglycolate. The polypeptide is Phosphoglycolate phosphatase (Natronomonas pharaonis (strain ATCC 35678 / DSM 2160 / CIP 103997 / JCM 8858 / NBRC 14720 / NCIMB 2260 / Gabara) (Halobacterium pharaonis)).